Here is a 127-residue protein sequence, read N- to C-terminus: Glycine cleavage system H protein (127 aa).

The Lipoyl-binding domain maps to 24-105; it reads TALVGITDFA…YEDGWMVKVS (82 aa). N6-lipoyllysine is present on lysine 65.

Belongs to the GcvH family. As to quaternary structure, the glycine cleavage system is composed of four proteins: P, T, L and H. (R)-lipoate is required as a cofactor.

The glycine cleavage system catalyzes the degradation of glycine. The H protein shuttles the methylamine group of glycine from the P protein to the T protein. This chain is Glycine cleavage system H protein, found in Prosthecochloris aestuarii (strain DSM 271 / SK 413).